An 858-amino-acid polypeptide reads, in one-letter code: DNA mismatch repair protein MutS (858 aa).

Position 613–620 (Gly613–Ser620) interacts with ATP.

It belongs to the DNA mismatch repair MutS family.

Its function is as follows. This protein is involved in the repair of mismatches in DNA. It is possible that it carries out the mismatch recognition step. This protein has a weak ATPase activity. In Dehalococcoides mccartyi (strain ATCC BAA-2100 / JCM 16839 / KCTC 5957 / BAV1), this protein is DNA mismatch repair protein MutS.